The primary structure comprises 261 residues: Gap junction beta-6 protein (261 aa).

Over 1 to 22 (MDWGTLHTFVGGVNKHSTSIGK) the chain is Cytoplasmic. The chain crosses the membrane as a helical span at residues 23–45 (VWVTVLFVFRVMILVVAAQEVWG). Residues 46 to 75 (DEQEDFVCNTLQPGCRNVCYDHFFPVSHIR) are Extracellular-facing. Residues 76–98 (LWALQLIFVSTPALLVAMHVAYY) traverse the membrane as a helical segment. The Cytoplasmic segment spans residues 99–131 (RHEAARRFRRGETRSEFKDLEDIKRQKVRIEGS). Residues 132–154 (LWWTYTSSIFFRIVFEAAFMYVF) form a helical membrane-spanning segment. Residues 155-192 (YFLYNGYHLPWVLKCGIQPCPNLVDCFISRPTEKTVFT) lie on the Extracellular side of the membrane. A helical transmembrane segment spans residues 193–215 (IFMISASVICMLLNVAELCYLLL). At 216–261 (KVCFRRSKRAQTQKAPPNHALKESKQNEMNELISEGGQNAITGFPS) the chain is on the cytoplasmic side.

It belongs to the connexin family. Beta-type (group I) subfamily. A connexon is composed of a hexamer of connexins. Interacts with CNST.

The protein localises to the cell membrane. The protein resides in the cell junction. It is found in the gap junction. Functionally, one gap junction consists of a cluster of closely packed pairs of transmembrane channels, the connexons, through which materials of low MW diffuse from one cell to a neighboring cell. The chain is Gap junction beta-6 protein (GJB6) from Bos taurus (Bovine).